The chain runs to 197 residues: Guanylate kinase (197 aa).

Residues 6-191 (SKLIILSGPS…CVAQIEKIIS (186 aa)) enclose the Guanylate kinase-like domain. ATP is bound at residue 13-20 (GPSGVGKG).

Belongs to the guanylate kinase family.

Its subcellular location is the cytoplasm. The enzyme catalyses GMP + ATP = GDP + ADP. Its function is as follows. Essential for recycling GMP and indirectly, cGMP. This Mesomycoplasma hyopneumoniae (strain 232) (Mycoplasma hyopneumoniae) protein is Guanylate kinase.